Reading from the N-terminus, the 83-residue chain is Short neurotoxin 3FTx-Oxy3 (83 aa).

The N-terminal stretch at 1–21 (MKTLLLTLVVVTIVCLDLGYT) is a signal peptide. 4 cysteine pairs are disulfide-bonded: C24/C45, C38/C62, C64/C75, and C76/C81.

This sequence belongs to the three-finger toxin family. Short-chain subfamily. Type I alpha-neurotoxin sub-subfamily. Expressed by the venom gland.

The protein localises to the secreted. Its function is as follows. Binds to muscle nicotinic acetylcholine receptor (nAChR) and inhibit acetylcholine from binding to the receptor, thereby impairing neuromuscular transmission. In Oxyuranus microlepidotus (Inland taipan), this protein is Short neurotoxin 3FTx-Oxy3.